The primary structure comprises 274 residues: 2-succinyl-6-hydroxy-2,4-cyclohexadiene-1-carboxylate synthase (274 aa).

Belongs to the AB hydrolase superfamily. MenH family. As to quaternary structure, monomer.

The catalysed reaction is 5-enolpyruvoyl-6-hydroxy-2-succinyl-cyclohex-3-ene-1-carboxylate = (1R,6R)-6-hydroxy-2-succinyl-cyclohexa-2,4-diene-1-carboxylate + pyruvate. It functions in the pathway quinol/quinone metabolism; 1,4-dihydroxy-2-naphthoate biosynthesis; 1,4-dihydroxy-2-naphthoate from chorismate: step 3/7. The protein operates within quinol/quinone metabolism; menaquinone biosynthesis. In terms of biological role, catalyzes a proton abstraction reaction that results in 2,5-elimination of pyruvate from 2-succinyl-5-enolpyruvyl-6-hydroxy-3-cyclohexene-1-carboxylate (SEPHCHC) and the formation of 2-succinyl-6-hydroxy-2,4-cyclohexadiene-1-carboxylate (SHCHC). This is 2-succinyl-6-hydroxy-2,4-cyclohexadiene-1-carboxylate synthase from Yersinia enterocolitica serotype O:8 / biotype 1B (strain NCTC 13174 / 8081).